Here is a 241-residue protein sequence, read N- to C-terminus: tRNA pseudouridine synthase A (241 aa).

The active-site Nucleophile is the D52. Y111 contributes to the substrate binding site.

The protein belongs to the tRNA pseudouridine synthase TruA family. As to quaternary structure, homodimer.

It carries out the reaction uridine(38/39/40) in tRNA = pseudouridine(38/39/40) in tRNA. Formation of pseudouridine at positions 38, 39 and 40 in the anticodon stem and loop of transfer RNAs. In Ureaplasma urealyticum serovar 10 (strain ATCC 33699 / Western), this protein is tRNA pseudouridine synthase A.